A 332-amino-acid polypeptide reads, in one-letter code: MVKIAIDAMGGDFGPKPIIDGCIQALKQKLFIPILVGKKSEILPLLPKRYRDKISIVEADDVVSMHDAATDALKRSESSIYKAIELVKNGEAQGVVSAGHSGATMTLATLRLGRLKGVLRPALVALMPTKSSRRSVILDVGANVDSKAEHLMQFAVMGGCYAEDMFKITTPSIGLLANGEEKSKGNELTKATFKLLEGYKGFKGNVEGSDIFNASCDVIVCDGFVGNLVLKASEGVASTITGLIKEYIRKSPVAITGALLMRKVFVLLKKQMDYAEIGGAPLIGIQGCVIVSHGKSNPKAIKNAIFQAISYVDTGVNGHIIQRLETLKNREN.

The protein belongs to the PlsX family. In terms of assembly, homodimer. Probably interacts with PlsY.

It localises to the cytoplasm. It catalyses the reaction a fatty acyl-[ACP] + phosphate = an acyl phosphate + holo-[ACP]. Its pathway is lipid metabolism; phospholipid metabolism. Functionally, catalyzes the reversible formation of acyl-phosphate (acyl-PO(4)) from acyl-[acyl-carrier-protein] (acyl-ACP). This enzyme utilizes acyl-ACP as fatty acyl donor, but not acyl-CoA. The protein is Phosphate acyltransferase of Sulfurimonas denitrificans (strain ATCC 33889 / DSM 1251) (Thiomicrospira denitrificans (strain ATCC 33889 / DSM 1251)).